The chain runs to 496 residues: Nitric oxide synthase, inducible (496 aa).

3 residues coordinate FMN: C6, E32, and Q36. In terms of domain architecture, FAD-binding FR-type spans 101-341; the sequence is KNLFTMRLRS…VRSVSGFQLP (241 aa). Residue R121 participates in NADP(+) binding. Residues H143, R277, Y279, S280, T295, and A297 each contribute to the FAD site. An NADP(+)-binding site is contributed by T300. FAD contacts are provided by Y301, V314, C315, and S316. Residues T355, R388, S417, R418, K424, Y426, Q428, and D461 each contribute to the NADP(+) site.

This sequence belongs to the NOS family. As to quaternary structure, homodimer. Interacts with NHERF1. Interacts with GAPDH; induced by oxidatively-modified low-densitity lipoprotein (LDL(ox)). Interacts with S100A8 and S100A9 to form the iNOS-S100A8/9 transnitrosylase complex. Interacts with SPSB1, SPSB2 and SPSB4. Interacts with ELOC and CUL5 in the presence of SPSB1 or SPSB2 or SPSB4. Forms a complex with ASL, ASS1 and HSP90AA1; the complex regulates cell-autonomous L-arginine synthesis and citrulline recycling while channeling extracellular L-arginine to nitric oxide synthesis pathway. The cofactor is heme b. FAD is required as a cofactor. It depends on FMN as a cofactor. (6R)-L-erythro-5,6,7,8-tetrahydrobiopterin serves as cofactor. Polyubiquitinated; mediated by SPSB1, SPSB2 and SPSB4, leading to proteasomal degradation.

It localises to the cytoplasm. Its subcellular location is the cytosol. It catalyses the reaction 2 L-arginine + 3 NADPH + 4 O2 + H(+) = 2 L-citrulline + 2 nitric oxide + 3 NADP(+) + 4 H2O. With respect to regulation, not stimulated by calcium/calmodulin. Its function is as follows. Produces nitric oxide (NO) which is a messenger molecule with diverse functions throughout the body. In macrophages, NO mediates tumoricidal and bactericidal actions. Also has nitrosylase activity and mediates cysteine S-nitrosylation of cytoplasmic target proteins such PTGS2/COX2. As component of the iNOS-S100A8/9 transnitrosylase complex involved in the selective inflammatory stimulus-dependent S-nitrosylation of GAPDH implicated in regulation of the GAIT complex activity and probably multiple targets including ANXA5, EZR, MSN and VIM. Involved in inflammation, enhances the synthesis of pro-inflammatory mediators such as IL6 and IL8. The protein is Nitric oxide synthase, inducible (NOS2) of Oryctolagus cuniculus (Rabbit).